A 636-amino-acid chain; its full sequence is tRNA 5-methylaminomethyl-2-thiouridine biosynthesis bifunctional protein MnmC (636 aa).

The interval 1-202 (MTVSKILKQV…ERAALRAQSH (202 aa)) is tRNA (mnm(5)s(2)U34)-methyltransferase. An FAD-dependent cmnm(5)s(2)U34 oxidoreductase region spans residues 227–636 (IGGGVASACL…GKALEMSGKS (410 aa)).

In the N-terminal section; belongs to the methyltransferase superfamily. tRNA (mnm(5)s(2)U34)-methyltransferase family. This sequence in the C-terminal section; belongs to the DAO family. FAD serves as cofactor.

Its subcellular location is the cytoplasm. The catalysed reaction is 5-aminomethyl-2-thiouridine(34) in tRNA + S-adenosyl-L-methionine = 5-methylaminomethyl-2-thiouridine(34) in tRNA + S-adenosyl-L-homocysteine + H(+). Functionally, catalyzes the last two steps in the biosynthesis of 5-methylaminomethyl-2-thiouridine (mnm(5)s(2)U) at the wobble position (U34) in tRNA. Catalyzes the FAD-dependent demodification of cmnm(5)s(2)U34 to nm(5)s(2)U34, followed by the transfer of a methyl group from S-adenosyl-L-methionine to nm(5)s(2)U34, to form mnm(5)s(2)U34. This Shewanella halifaxensis (strain HAW-EB4) protein is tRNA 5-methylaminomethyl-2-thiouridine biosynthesis bifunctional protein MnmC.